Consider the following 952-residue polypeptide: Protein translocase subunit SecA (952 aa).

ATP is bound by residues Q135, 153-157, and D575; that span reads GEGKT. The span at 614 to 624 shows a compositional bias: basic and acidic residues; that stretch reads RHESRRIDNQL. 2 disordered regions span residues 614–636 and 916–946; these read RHESRRIDNQLRGRSGRQGDPGS and VSAKAATQSTTPAAKEIGRNDPCPCGSGKKY. The Zn(2+) site is built by C938, C940, C949, and C950.

The protein belongs to the SecA family. In terms of assembly, monomer and homodimer. Part of the essential Sec protein translocation apparatus which comprises SecA, SecYEG and auxiliary proteins SecDF. Other proteins may also be involved. Zn(2+) serves as cofactor.

The protein resides in the cell membrane. The protein localises to the cytoplasm. The enzyme catalyses ATP + H2O + cellular proteinSide 1 = ADP + phosphate + cellular proteinSide 2.. Its function is as follows. Part of the Sec protein translocase complex. Interacts with the SecYEG preprotein conducting channel. Has a central role in coupling the hydrolysis of ATP to the transfer of proteins into and across the cell membrane, serving as an ATP-driven molecular motor driving the stepwise translocation of polypeptide chains across the membrane. The chain is Protein translocase subunit SecA from Dehalococcoides mccartyi (strain ATCC BAA-2100 / JCM 16839 / KCTC 5957 / BAV1).